Consider the following 116-residue polypeptide: Putative oxygen-evolving enhancer protein 1 (116 aa).

It belongs to the PsbO family.

The protein localises to the plastid. The protein resides in the chloroplast thylakoid membrane. In terms of biological role, stabilizes the manganese cluster which is the primary site of water splitting. The sequence is that of Putative oxygen-evolving enhancer protein 1 from Pinus strobus (Eastern white pine).